We begin with the raw amino-acid sequence, 207 residues long: Small ribosomal subunit protein uS2 (207 aa).

It belongs to the universal ribosomal protein uS2 family.

The protein is Small ribosomal subunit protein uS2 of Nitrosopumilus maritimus (strain SCM1).